A 575-amino-acid polypeptide reads, in one-letter code: Septation ring formation regulator EzrA (575 aa).

Topologically, residues 1–8 (MSNGQLIY) are extracellular. Residues 9 to 27 (LMVAIAVILVLAYVVAIFL) form a helical membrane-spanning segment. Topologically, residues 28–575 (RKRNEGRLEA…YEKTRETIRF (548 aa)) are cytoplasmic. Coiled coils occupy residues 105 to 191 (LKAS…FVTL), 265 to 301 (LYEA…LYDI), 354 to 416 (VRRI…IEKD), and 456 to 526 (TASN…IQEA).

The protein belongs to the EzrA family.

It localises to the cell membrane. In terms of biological role, negative regulator of FtsZ ring formation; modulates the frequency and position of FtsZ ring formation. Inhibits FtsZ ring formation at polar sites. Interacts either with FtsZ or with one of its binding partners to promote depolymerization. In Streptococcus pneumoniae (strain ATCC BAA-255 / R6), this protein is Septation ring formation regulator EzrA.